The sequence spans 577 residues: Zinc finger protein 384 (577 aa).

The tract at residues T171–G225 is disordered. Over residues E175 to S185 the composition is skewed to gly residues. Phosphoserine is present on S214. 8 consecutive C2H2-type zinc fingers follow at residues Y228–H250, H256–H278, Y284–H306, H317–H339, Y345–H367, Y373–H397, F403–H425, and Y433–H455. The span at Q501–Q515 shows a compositional bias: low complexity. Residues Q501–P550 form a disordered region.

This sequence belongs to the krueppel C2H2-type zinc-finger protein family. As to quaternary structure, interacts with BCAR1.

Its subcellular location is the nucleus. Transcription factor that binds the consensus DNA sequence [GC]AAAAA. Seems to bind and regulate the promoters of MMP1, MMP3, MMP7 and COL1A1. The sequence is that of Zinc finger protein 384 (ZNF384) from Homo sapiens (Human).